The following is a 440-amino-acid chain: Protein C-ets-1 (440 aa).

An N6-acetyllysine; alternate mark is found at Lys8 and Lys15. Glycyl lysine isopeptide (Lys-Gly) (interchain with G-Cter in SUMO2); alternate cross-links involve residues Lys8 and Lys15. Lys15 is covalently cross-linked (Glycyl lysine isopeptide (Lys-Gly) (interchain with G-Cter in SUMO); alternate). Thr38 is modified (phosphothreonine; by MAPK). In terms of domain architecture, PNT spans 51 to 136 (ATFSGFTKEQ…EHLEILQKED (86 aa)). The interval 130–243 (EILQKEDVKP…DNMCLGRASR (114 aa)) is activation domain; required for transcription activation. Lys138 participates in a covalent cross-link: Glycyl lysine isopeptide (Lys-Gly) (interchain with G-Cter in SUMO2). Position 223 is a phosphotyrosine (Tyr223). Lys227 is covalently cross-linked (Glycyl lysine isopeptide (Lys-Gly) (interchain with G-Cter in SUMO)). A Phosphoserine; by CaMK2 modification is found at Ser251. Ser254 is subject to Phosphoserine. The residue at position 265 (Thr265) is a Phosphothreonine. Phosphoserine occurs at positions 267 and 270. Ser282 and Ser285 each carry phosphoserine; by CaMK2. A helix HI-1 region spans residues 304 to 312 (FKDYVRDRA). Lys305 bears the N6-acetyllysine mark. Residues 323-330 (AAALAGYT) are helix HI-2. A DNA-binding region (ETS) is located at residues 335 to 415 (IQLWQFLLEL…AGKRYVYRFV (81 aa)). Residues 418 to 422 (LQSLL) are helix H4. The tract at residues 426–432 (PEELHAM) is helix H5.

The protein belongs to the ETS family. Binds DNA as a homodimer; homodimerization is required for transcription activation. Interacts with MAF and MAFB. Interacts with PAX5; the interaction alters DNA-binding properties. Interacts with DAXX. Interacts with UBE2I. Interacts with SP100; the interaction is direct and modulates ETS1 transcriptional activity. Phosphorylation at Ser-251, Ser-282 and Ser-285 by CaMK2/CaMKII in response to calcium signaling decreases affinity for DNA: an increasing number of phosphoserines causes DNA-binding to become progressively weaker. Post-translationally, sumoylated on Lys-15 and Lys-227, preferentially with SUMO2; which inhibits transcriptional activity. In terms of processing, ubiquitinated; which induces proteasomal degradation.

The protein resides in the nucleus. Its subcellular location is the cytoplasm. Its activity is regulated as follows. Autoinhibited by a module composed of four alpha helices (HI-1, HI-2, H4, and H5) that flank the DNA-binding ETS domain, reducing the affinity for DNA. Phosphorylation by CaMK2/CaMKII in response to calcium signaling decreases affinity for DNA. In terms of biological role, transcription factor. Directly controls the expression of cytokine and chemokine genes in a wide variety of different cellular contexts. May control the differentiation, survival and proliferation of lymphoid cells. May also regulate angiogenesis through regulation of expression of genes controlling endothelial cell migration and invasion. The sequence is that of Protein C-ets-1 (Ets1) from Mus musculus (Mouse).